The primary structure comprises 482 residues: tRNA sulfurtransferase (482 aa).

Residues 61-165 (QQVLEILTTT…DDKLNQILAH (105 aa)) form the THUMP domain. ATP contacts are provided by residues 183–184 (LI), Lys-265, Gly-287, and Gln-296. Residues Cys-344 and Cys-456 are joined by a disulfide bond. Residues 404 to 482 (IEEHAVVLDI…GFNNVKVYRP (79 aa)) form the Rhodanese domain. Cys-456 functions as the Cysteine persulfide intermediate in the catalytic mechanism.

The protein belongs to the ThiI family.

Its subcellular location is the cytoplasm. It catalyses the reaction [ThiI sulfur-carrier protein]-S-sulfanyl-L-cysteine + a uridine in tRNA + 2 reduced [2Fe-2S]-[ferredoxin] + ATP + H(+) = [ThiI sulfur-carrier protein]-L-cysteine + a 4-thiouridine in tRNA + 2 oxidized [2Fe-2S]-[ferredoxin] + AMP + diphosphate. The enzyme catalyses [ThiS sulfur-carrier protein]-C-terminal Gly-Gly-AMP + S-sulfanyl-L-cysteinyl-[cysteine desulfurase] + AH2 = [ThiS sulfur-carrier protein]-C-terminal-Gly-aminoethanethioate + L-cysteinyl-[cysteine desulfurase] + A + AMP + 2 H(+). It participates in cofactor biosynthesis; thiamine diphosphate biosynthesis. Catalyzes the ATP-dependent transfer of a sulfur to tRNA to produce 4-thiouridine in position 8 of tRNAs, which functions as a near-UV photosensor. Also catalyzes the transfer of sulfur to the sulfur carrier protein ThiS, forming ThiS-thiocarboxylate. This is a step in the synthesis of thiazole, in the thiamine biosynthesis pathway. The sulfur is donated as persulfide by IscS. The polypeptide is tRNA sulfurtransferase (Vibrio vulnificus (strain CMCP6)).